The primary structure comprises 170 residues: Large ribosomal subunit protein uL10 (170 aa).

This sequence belongs to the universal ribosomal protein uL10 family. In terms of assembly, part of the ribosomal stalk of the 50S ribosomal subunit. The N-terminus interacts with L11 and the large rRNA to form the base of the stalk. The C-terminus forms an elongated spine to which L12 dimers bind in a sequential fashion forming a multimeric L10(L12)X complex.

Forms part of the ribosomal stalk, playing a central role in the interaction of the ribosome with GTP-bound translation factors. This Nitratiruptor sp. (strain SB155-2) protein is Large ribosomal subunit protein uL10.